Reading from the N-terminus, the 454-residue chain is Inner membrane permease YgbN (454 aa).

Methionine 1 is a topological domain (periplasmic). Residues 2-22 (STITLLCIALAGVIMLLLLVI) form a helical membrane-spanning segment. The Cytoplasmic segment spans residues 23–27 (KAKVQ). The helical transmembrane segment at 28–48 (PFVALLLVSLLVALAAGIPAG) threads the bilayer. Residues 49–52 (EVGK) are Periplasmic-facing. Residues 53 to 73 (VMIAGMGGVLGSVTIIIGLGA) traverse the membrane as a helical segment. At 74-108 (MLGRMIEHSGGAESLANYFSRKLGDKRTIAALTLA) the chain is on the cytoplasmic side. The chain crosses the membrane as a helical span at residues 109-129 (AFFLGIPVFFDVGFIILAPII). At 130–137 (YGFAKVAK) the chain is on the periplasmic side. The helical transmembrane segment at 138 to 158 (ISPLKFGLPVAGIMLTVHVAV) threads the bilayer. At 159-174 (PPHPGPVAAAGLLHAD) the chain is on the cytoplasmic side. Residues 175-195 (IGWLTIIGIAISIPVGVVGYF) form a helical membrane-spanning segment. The Periplasmic segment spans residues 196-235 (AAKIINKRQYAMSVEVLEQMQLAPASEEGATKLSDKINPP). A helical membrane pass occupies residues 236 to 256 (GVALVTSLIVIPIAIIMAGTV). At 257–273 (SATLMPPSHPLLGTLQL) the chain is on the cytoplasmic side. A helical membrane pass occupies residues 274-294 (IGSPMVALMIALVLAFWLLAL). Residues 295–305 (RRGWSLQHTSD) lie on the Periplasmic side of the membrane. A helical membrane pass occupies residues 306 to 326 (IMGSALPTAAVVILVTGAGGV). At 327-341 (FGKVLVESGVGKALA) the chain is on the cytoplasmic side. The helical transmembrane segment at 342 to 362 (NMLQMIDLPLLPAAFIISLAL) threads the bilayer. The Periplasmic portion of the chain corresponds to 363-383 (RASQGSATVAILTTGGLLSEA). The helical transmembrane segment at 384-404 (VMGLNPIQCVLVTLAACFGGL) threads the bilayer. At 405 to 433 (GASHINDSGFWIVTKYLGLSVADGLKTWT) the chain is on the cytoplasmic side. The chain crosses the membrane as a helical span at residues 434–454 (VLTTILGFTGFLITWCVWAVI).

It belongs to the GntP permease family.

It is found in the cell inner membrane. This chain is Inner membrane permease YgbN (ygbN), found in Escherichia coli (strain K12).